A 329-amino-acid chain; its full sequence is Phosphate acetyltransferase (329 aa).

Belongs to the phosphate acetyltransferase and butyryltransferase family.

It is found in the cytoplasm. The enzyme catalyses acetyl-CoA + phosphate = acetyl phosphate + CoA. It participates in metabolic intermediate biosynthesis; acetyl-CoA biosynthesis; acetyl-CoA from acetate: step 2/2. The protein is Phosphate acetyltransferase (pta) of Staphylococcus epidermidis (strain ATCC 12228 / FDA PCI 1200).